The sequence spans 199 residues: Probable adenine phosphoribosyltransferase (199 aa).

It belongs to the purine/pyrimidine phosphoribosyltransferase family. As to quaternary structure, homodimer.

It localises to the cytoplasm. The enzyme catalyses AMP + diphosphate = 5-phospho-alpha-D-ribose 1-diphosphate + adenine. It functions in the pathway purine metabolism; AMP biosynthesis via salvage pathway; AMP from adenine: step 1/1. Functionally, catalyzes a salvage reaction resulting in the formation of AMP, that is energically less costly than de novo synthesis. The protein is Probable adenine phosphoribosyltransferase (aprt) of Dictyostelium discoideum (Social amoeba).